A 102-amino-acid polypeptide reads, in one-letter code: MQSQKIRIRLKAYDHKLLDVSVGEIVETAKRTGARVAGPIPLPTVINKYCVLRGPHVDKKSRDQFEIRTHKRLIDILDPTQQTVDALMKLDLSAGVDVEIKL.

This sequence belongs to the universal ribosomal protein uS10 family. As to quaternary structure, part of the 30S ribosomal subunit.

Functionally, involved in the binding of tRNA to the ribosomes. The chain is Small ribosomal subunit protein uS10 from Trichlorobacter lovleyi (strain ATCC BAA-1151 / DSM 17278 / SZ) (Geobacter lovleyi).